The sequence spans 338 residues: Glycerol-3-phosphate dehydrogenase [NAD(P)+] (338 aa).

Ser-14, Tyr-15, His-35, and Lys-109 together coordinate NADPH. Residues Lys-109, Gly-138, and Thr-140 each coordinate sn-glycerol 3-phosphate. Position 142 (Ala-142) interacts with NADPH. The sn-glycerol 3-phosphate site is built by Lys-194, Asp-247, Ser-257, Arg-258, and Asn-259. Lys-194 acts as the Proton acceptor in catalysis. Residue Arg-258 coordinates NADPH. Residues Val-282 and Glu-284 each coordinate NADPH.

It belongs to the NAD-dependent glycerol-3-phosphate dehydrogenase family.

The protein localises to the cytoplasm. The enzyme catalyses sn-glycerol 3-phosphate + NAD(+) = dihydroxyacetone phosphate + NADH + H(+). It carries out the reaction sn-glycerol 3-phosphate + NADP(+) = dihydroxyacetone phosphate + NADPH + H(+). Its pathway is membrane lipid metabolism; glycerophospholipid metabolism. Its function is as follows. Catalyzes the reduction of the glycolytic intermediate dihydroxyacetone phosphate (DHAP) to sn-glycerol 3-phosphate (G3P), the key precursor for phospholipid synthesis. This Shewanella oneidensis (strain ATCC 700550 / JCM 31522 / CIP 106686 / LMG 19005 / NCIMB 14063 / MR-1) protein is Glycerol-3-phosphate dehydrogenase [NAD(P)+].